A 1370-amino-acid chain; its full sequence is Zinc finger MYM-type protein 3 (1370 aa).

Low complexity-rich tracts occupy residues 1 to 12, 40 to 56, and 130 to 146; these read MDPSDFPSPFDP, APSRGWAPPGPSPSSGA, and GAGASPPSPEGLLEPLA. Disordered regions lie at residues 1–73 and 85–310; these read MDPS…PGGV and GLLY…MGTK. Over residues 227–255 the composition is skewed to basic and acidic residues; that stretch reads TGKEIEKPPERVQKRSERVRRAEPPKPEV. Phosphoserine is present on residues Ser-265 and Ser-269. Acidic residues predominate over residues 265-281; that stretch reads SDEDSDAMVDDPNDEDF. Glycyl lysine isopeptide (Lys-Gly) (interchain with G-Cter in SUMO2) cross-links involve residues Lys-310, Lys-322, and Lys-330. 9 MYM-type zinc fingers span residues 334 to 368, 380 to 424, 431 to 466, 479 to 513, 523 to 561, 569 to 606, 614 to 648, 655 to 694, and 701 to 735; these read QLFCSSSCLTTYSKKPLGRKTCTFCKKEIWNTKDS, HEFC…LHEV, HRLCSDSCFSKFRANKGLKTNCCDQCGAYIYARPGG, KRFCNTTCLGAYKKKNTRVYPCVWCKTLCKNFEML, SLFCSLCCTTSYKVKQAGLTGPPRPCSFCRRSLSDPCYY, YQFCSPSCWTKFQHTSPEGGIHLSCHYCHSLFSGKPEV, FQFCCRDCCEDFKRLRGVVSQCEHCRQEKLLHEKL, KSFCSEGCVLLYKQDFTKKLGLCCITCTYCSQTCQRGVTE, and WDFCSEDCKTKYLLWYCKAARCHACKRQGKLLETI. The span at 761–789 shows a compositional bias: polar residues; the sequence is NLDTQSGPESLLNSQSSESKPQTPSQTKV. Positions 761 to 831 are disordered; that stretch reads NLDTQSGPES…PPPPATPRKN (71 aa). Glycyl lysine isopeptide (Lys-Gly) (interchain with G-Cter in SUMO2) cross-links involve residues Lys-780 and Lys-788. A compositionally biased stretch (basic and acidic residues) spans 790–799; the sequence is ENNHTVRTPD. Phosphothreonine is present on Thr-797. A Glycyl lysine isopeptide (Lys-Gly) (interchain with G-Cter in SUMO2) cross-link involves residue Lys-806. Pro residues predominate over residues 816–827; that stretch reads VPTPPPPPPPAT. A phosphothreonine mark is found at Thr-818 and Thr-827. Glycyl lysine isopeptide (Lys-Gly) (interchain with G-Cter in SUMO2) cross-links involve residues Lys-848, Lys-862, Lys-921, and Lys-1276.

As to quaternary structure, may be a component of a BHC histone deacetylase complex that contains HDAC1, HDAC2, HMG20B/BRAF35, KDM1A, RCOR1/CoREST, PHF21A/BHC80, ZMYM2, ZNF217, ZMYM3, GSE1 and GTF2I. In terms of tissue distribution, ubiquitously expressed in all embryonic stages and adult tissues.

Its subcellular location is the nucleus. Functionally, plays a role in the regulation of cell morphology and cytoskeletal organization. The sequence is that of Zinc finger MYM-type protein 3 (Zmym3) from Mus musculus (Mouse).